We begin with the raw amino-acid sequence, 41 residues long: Large ribosomal subunit protein bL36 (41 aa).

It belongs to the bacterial ribosomal protein bL36 family.

In Methylocella silvestris (strain DSM 15510 / CIP 108128 / LMG 27833 / NCIMB 13906 / BL2), this protein is Large ribosomal subunit protein bL36.